A 194-amino-acid chain; its full sequence is Large ribosomal subunit protein bL25 (194 aa).

The protein belongs to the bacterial ribosomal protein bL25 family. CTC subfamily. As to quaternary structure, part of the 50S ribosomal subunit; part of the 5S rRNA/L5/L18/L25 subcomplex. Contacts the 5S rRNA. Binds to the 5S rRNA independently of L5 and L18.

Its function is as follows. This is one of the proteins that binds to the 5S RNA in the ribosome where it forms part of the central protuberance. The protein is Large ribosomal subunit protein bL25 of Neorickettsia sennetsu (strain ATCC VR-367 / Miyayama) (Ehrlichia sennetsu).